The primary structure comprises 132 residues: Small ribosomal subunit protein uS8c (132 aa).

The protein belongs to the universal ribosomal protein uS8 family. In terms of assembly, part of the 30S ribosomal subunit.

Its subcellular location is the plastid. The protein localises to the chloroplast. One of the primary rRNA binding proteins, it binds directly to 16S rRNA central domain where it helps coordinate assembly of the platform of the 30S subunit. The polypeptide is Small ribosomal subunit protein uS8c (rps8) (Buxus microphylla (Littleleaf boxwood)).